Consider the following 1262-residue polypeptide: Zinc finger protein 592 (1262 aa).

The disordered stretch occupies residues 23-45 (SLDAKEAIQAPSEENESPLKSSG). Phosphoserine occurs at positions 78, 142, 145, and 146. Disordered stretches follow at residues 122 to 174 (SFTS…PPPG), 200 to 278 (KKEP…AHSK), and 294 to 494 (VANV…ASTP). Residues lysine 200 and lysine 204 each participate in a glycyl lysine isopeptide (Lys-Gly) (interchain with G-Cter in SUMO2) cross-link. Basic and acidic residues-rich tracts occupy residues 213–232 (QQEHEQGGQKVVEPHKDLDS) and 298–308 (TKEDQPGHTKD). The span at 343 to 367 (PSDSPRSICSDSSSKGSPSVAASSP) shows a compositional bias: low complexity. The segment covering 454-463 (IKTSDSSSPC) has biased composition (polar residues). The span at 484-494 (QQSTAPQASTP) shows a compositional bias: low complexity. Serine 529 is subject to Phosphoserine. Residue lysine 546 forms a Glycyl lysine isopeptide (Lys-Gly) (interchain with G-Cter in SUMO2) linkage. The residue at position 573 (serine 573) is a Phosphoserine. The C2H2-type 1; atypical zinc-finger motif lies at 587-612 (YCCLECGDAFALEKSLSQHYSRRSVH). The segment at 615-639 (VLCTLCSKTLLFFNKCSLLRHARDH) adopts a C2H2-type 2; atypical zinc-finger fold. At serine 691 the chain carries Phosphoserine. The C2H2-type 3; degenerate zinc finger occupies 711 to 731 (TKCPECHKQMRDYMVLATHFQ). Residues 740–764 (LTCQVCQMLLPNQCSFCAHQRIHAH) form a C2H2-type 4 zinc finger. The C2H2-type 5; atypical zinc-finger motif lies at 768 to 790 (YCCPECGVLCRSAYFQTHVKENC). 3 consecutive C2H2-type zinc fingers follow at residues 799 to 822 (YRCIHCGVIHLTLALLKSHIQERH), 827 to 850 (HKCAFCPMAFKTASSTMDHSTTQH), and 892 to 915 (FKCPECPLLFLQKPELMQHVKNTH). The segment covering 924 to 935 (LSSLQSSTDTSS) has biased composition (low complexity). A disordered region spans residues 924-979 (LSSLQSSTDTSSNRPGSRAPAEPPATNVAARGSSLTAGRWGRPEAHRRAEARPRMR). Over residues 964–976 (GRPEAHRRAEARP) the composition is skewed to basic and acidic residues. C2H2-type zinc fingers lie at residues 983–1006 (WTCQECQEWVPDRESYVSHMKKSH) and 1013–1036 (YPCRQCEQSFHNPSSLRKHIRNNH). The segment at 1043–1069 (YTCGYCTEDSPSFPRPSLLESHISLMH) adopts a C2H2-type 11; atypical zinc-finger fold. Serine 1089 carries the post-translational modification Phosphoserine. The C2H2-type 12; atypical zinc-finger motif lies at 1124-1146 (FQCAKCTFATDSELEFQSHIPQH). A C2H2-type 13 zinc finger spans residues 1153–1176 (AQCLLCGLCYTSTSSLNRHLFIVH). Residues serine 1198 and serine 1202 each carry the phosphoserine modification. Positions 1222 to 1262 (PLVTDLGGQQGLALDEDSAQDPQNQPQASQDQNSHALSPQV) are disordered. A compositionally biased stretch (polar residues) spans 1241 to 1262 (QDPQNQPQASQDQNSHALSPQV).

Belongs to the krueppel C2H2-type zinc-finger protein family. Interacts with ZMYND8. As to expression, expressed in the brain.

The protein resides in the nucleus. Its function is as follows. May be involved in transcriptional regulation. The chain is Zinc finger protein 592 (Znf592) from Mus musculus (Mouse).